A 354-amino-acid polypeptide reads, in one-letter code: Probable alcohol acetyltransferase (354 aa).

Residues serine 124 and histidine 293 each act as charge relay system in the active site.

The protein belongs to the AB hydrolase superfamily.

Its function is as follows. Probable alcohol acetyltransferase that uses acetyl-CoA to synthesize acetate esters from various alcohols. Not involved in the synthesis of ethyl acetate. The sequence is that of Probable alcohol acetyltransferase (EAT2) from Cyberlindnera jadinii (strain ATCC 18201 / CBS 1600 / BCRC 20928 / JCM 3617 / NBRC 0987 / NRRL Y-1542) (Torula yeast).